The sequence spans 101 residues: Small ribosomal subunit protein bS16 (101 aa).

This sequence belongs to the bacterial ribosomal protein bS16 family.

The protein is Small ribosomal subunit protein bS16 of Ureaplasma urealyticum serovar 10 (strain ATCC 33699 / Western).